The following is a 370-amino-acid chain: Putative phosphoserine aminotransferase (370 aa).

The tract at residues 1–22 (MAELTIPADLKPRDGRFGSGPS) is disordered. An L-glutamate-binding site is contributed by R44. The pyridoxal 5'-phosphate site is built by F102, T148, D170, and Q193. K194 is modified (N6-(pyridoxal phosphate)lysine). 245–246 (NT) is a pyridoxal 5'-phosphate binding site.

Belongs to the class-V pyridoxal-phosphate-dependent aminotransferase family. SerC subfamily. In terms of assembly, homodimer. Pyridoxal 5'-phosphate serves as cofactor.

It is found in the cytoplasm. It catalyses the reaction O-phospho-L-serine + 2-oxoglutarate = 3-phosphooxypyruvate + L-glutamate. It carries out the reaction 4-(phosphooxy)-L-threonine + 2-oxoglutarate = (R)-3-hydroxy-2-oxo-4-phosphooxybutanoate + L-glutamate. It participates in amino-acid biosynthesis; L-serine biosynthesis; L-serine from 3-phospho-D-glycerate: step 2/3. Its pathway is cofactor biosynthesis; pyridoxine 5'-phosphate biosynthesis; pyridoxine 5'-phosphate from D-erythrose 4-phosphate: step 3/5. Catalyzes the reversible conversion of 3-phosphohydroxypyruvate to phosphoserine and of 3-hydroxy-2-oxo-4-phosphonooxybutanoate to phosphohydroxythreonine. In Mycobacterium sp. (strain JLS), this protein is Putative phosphoserine aminotransferase.